The primary structure comprises 699 residues: Chitin synthase 7 (699 aa).

Helical transmembrane passes span 19-39, 58-80, 98-118, 445-465, 474-494, and 507-527; these read IVGV…AAFL, SVVV…VVTL, LQWF…LFCI, FMQN…LAII, LPVG…IYFG, and VMFV…IFTA. The interval 628-648 is disordered; it reads AAGGSGEASEPGTRWAPDPRE.

It belongs to the chitin synthase family. Class VI subfamily.

The protein localises to the cell membrane. It carries out the reaction [(1-&gt;4)-N-acetyl-beta-D-glucosaminyl](n) + UDP-N-acetyl-alpha-D-glucosamine = [(1-&gt;4)-N-acetyl-beta-D-glucosaminyl](n+1) + UDP + H(+). In terms of biological role, polymerizes chitin, a structural polymer of the cell wall and septum, by transferring the sugar moiety of UDP-GlcNAc to the non-reducing end of the growing chitin polymer. Plays a role in cell wall integrity. Required to successfully penetrate the host plants and thus plays a key role in pathogenicity. The chain is Chitin synthase 7 from Verticillium dahliae (strain VdLs.17 / ATCC MYA-4575 / FGSC 10137) (Verticillium wilt).